The chain runs to 432 residues: Histidine--tRNA ligase (432 aa).

This sequence belongs to the class-II aminoacyl-tRNA synthetase family. Homodimer.

It localises to the cytoplasm. It carries out the reaction tRNA(His) + L-histidine + ATP = L-histidyl-tRNA(His) + AMP + diphosphate + H(+). The chain is Histidine--tRNA ligase from Ralstonia nicotianae (strain ATCC BAA-1114 / GMI1000) (Ralstonia solanacearum).